Consider the following 213-residue polypeptide: Redox-sensing transcriptional repressor Rex (213 aa).

Positions 17 to 56 (LYYRIFKRFHSENIEKASSKQIAEAIGIDSATVRRDFSYF) form a DNA-binding region, H-T-H motif. 91–96 (GVGNIG) contributes to the NAD(+) binding site.

Belongs to the transcriptional regulatory Rex family. Homodimer.

Its subcellular location is the cytoplasm. Functionally, modulates transcription in response to changes in cellular NADH/NAD(+) redox state. In Streptococcus mutans serotype c (strain ATCC 700610 / UA159), this protein is Redox-sensing transcriptional repressor Rex.